The chain runs to 198 residues: dITP/XTP pyrophosphatase (198 aa).

Substrate is bound at residue 9–14 (SNNAKK). Mg(2+)-binding residues include Asp41 and Asp70. Catalysis depends on Asp70, which acts as the Proton acceptor. Substrate is bound by residues Ser71, 153–156 (FGYD), Lys176, and 181–182 (HR).

Belongs to the HAM1 NTPase family. In terms of assembly, homodimer. The cofactor is Mg(2+).

It carries out the reaction XTP + H2O = XMP + diphosphate + H(+). The catalysed reaction is dITP + H2O = dIMP + diphosphate + H(+). It catalyses the reaction ITP + H2O = IMP + diphosphate + H(+). In terms of biological role, pyrophosphatase that catalyzes the hydrolysis of nucleoside triphosphates to their monophosphate derivatives, with a high preference for the non-canonical purine nucleotides XTP (xanthosine triphosphate), dITP (deoxyinosine triphosphate) and ITP. Seems to function as a house-cleaning enzyme that removes non-canonical purine nucleotides from the nucleotide pool, thus preventing their incorporation into DNA/RNA and avoiding chromosomal lesions. The sequence is that of dITP/XTP pyrophosphatase from Aromatoleum aromaticum (strain DSM 19018 / LMG 30748 / EbN1) (Azoarcus sp. (strain EbN1)).